The sequence spans 84 residues: Large ribosomal subunit protein bL27 (84 aa).

The disordered stretch occupies residues 1 to 21 (MAHKKAGGSTRNGRDSNPKYL).

Belongs to the bacterial ribosomal protein bL27 family.

The sequence is that of Large ribosomal subunit protein bL27 from Francisella tularensis subsp. holarctica (strain FTNF002-00 / FTA).